The primary structure comprises 360 residues: Protein Wnt-2 (360 aa).

Positions 1–37 are cleaved as a signal peptide; that stretch reads MIPRRSCWLILLLNLLNVQSLLDASWWSTVAQLSTAL. Cystine bridges form between Cys80-Cys91, Cys130-Cys138, Cys140-Cys158, Cys213-Cys227, Cys215-Cys222, Cys289-Cys320, Cys305-Cys315, Cys319-Cys359, Cys335-Cys350, Cys337-Cys347, and Cys342-Cys343. Residue Asn90 is glycosylated (N-linked (GlcNAc...) asparagine). A lipid anchor (O-palmitoleoyl serine; by mom-1) is attached at Ser219. Asn352 carries N-linked (GlcNAc...) asparagine glycosylation.

Belongs to the Wnt family. Post-translationally, palmitoleoylation is required for efficient binding to frizzled receptors. Depalmitoleoylation leads to Wnt signaling pathway inhibition. As to expression, expressed in intestine, pharynx, anterior body wall muscle, vulva, some pharyngeal neurons and SMD head neurons. Expressed along the boundary between the intestine and muscle or hypodermis, but is also expressed in the hypodermis in cells including seam cells.

It is found in the secreted. The protein localises to the extracellular space. Its subcellular location is the extracellular matrix. Ligand for members of the frizzled family of seven transmembrane receptors. Probable developmental protein. May be a signaling molecule which affects the development of discrete regions of tissues. Is likely to signal over only few cell diameters. Involved in the correct positioning of the developing nerve ring and in axon guidance of SIA and SIB neurons, probably by binding to tyrosine kinase receptor cam-1. In addition, regulates the positioning of some head neuronal cells, muscle arms associated with the nerve ring and the excretory pore. Together with Wnt ligand cwn-1, regulates the migration of CAN, ALM, BDU and HSN neurons during embryogenesis, the migration of QL and QR neuroblast descendants during larval development, and polarity of ALM neurons. May act through the wnt receptor cfz-2 to regulate QR neuroblast descendant migration, and to direct ALM migration. Also plays a role in axon growth and guidance in HSN and male CP neurons. In addition, together with wnt ligand cwn-1, negatively regulates developmental neurite pruning of AIM neurons probably by acting as a ligand for receptor tyrosine kinase cam-1. Through the cam-1 receptor also probably regulates the outgrowth of neurites from RME GABAergic motor neurons. May act redundantly with other Wnt ligands such as cwn-1 and mom-2 to control seam cell polarity. This Caenorhabditis elegans protein is Protein Wnt-2.